A 156-amino-acid chain; its full sequence is S-ribosylhomocysteine lyase (156 aa).

His53, His57, and Cys122 together coordinate Fe cation.

The protein belongs to the LuxS family. Homodimer. Fe cation serves as cofactor.

The catalysed reaction is S-(5-deoxy-D-ribos-5-yl)-L-homocysteine = (S)-4,5-dihydroxypentane-2,3-dione + L-homocysteine. Involved in the synthesis of autoinducer 2 (AI-2) which is secreted by bacteria and is used to communicate both the cell density and the metabolic potential of the environment. The regulation of gene expression in response to changes in cell density is called quorum sensing. Catalyzes the transformation of S-ribosylhomocysteine (RHC) to homocysteine (HC) and 4,5-dihydroxy-2,3-pentadione (DPD). The protein is S-ribosylhomocysteine lyase of Finegoldia magna (strain ATCC 29328 / DSM 20472 / WAL 2508) (Peptostreptococcus magnus).